Consider the following 2511-residue polypeptide: Fatty acid synthase (2511 aa).

Met-1 is modified (N-acetylmethionine). The 406-residue stretch at 1 to 406 folds into the Ketosynthase family 3 (KS3) domain; that stretch reads MEEVVIAGMS…GSNVHIILRP (406 aa). At Ser-63 the chain carries Phosphoserine. Residue Lys-70 is modified to N6-acetyllysine. The active-site For beta-ketoacyl synthase activity is the Cys-161. Position 207 is a phosphoserine (Ser-207). The active-site For beta-ketoacyl synthase activity is the His-293. Lys-298 carries the N6-acetyllysine modification. His-331 acts as the For beta-ketoacyl synthase activity in catalysis. The tract at residues 429-817 is acyl and malonyl transferases; the sequence is RTPEAVQKLL…IDANPNALFP (389 aa). N6-acetyllysine occurs at positions 436 and 528. Residue Ser-581 is the For malonyltransferase activity of the active site. An acyl-CoA is bound by residues 647–648 and Phe-671; that span reads DT. At Lys-673 the chain carries N6-acetyllysine. Position 725 is a phosphoserine (Ser-725). An acyl-CoA is bound at residue Arg-773. The tract at residues 838 to 966 is N-terminal hotdog fold; it reads HSLAWDVPAA…KVYQWDDPDP (129 aa). The region spanning 838–1108 is the PKS/mFAS DH domain; it reads HSLAWDVPAA…TESAPRRQQE (271 aa). The active-site Proton acceptor; for dehydratase activity is the His-878. Residues 981–1108 form a C-terminal hotdog fold region; sequence EPLFLAQAEV…TESAPRRQQE (128 aa). N6-acetyllysine is present on Lys-992. Catalysis depends on Asp-1031, which acts as the Proton donor; for dehydratase activity. Ser-1174 and Ser-1411 each carry phosphoserine. Cys-1471 bears the S-nitrosocysteine mark. Phosphoserine is present on residues Ser-1584 and Ser-1594. An enoyl reductase region spans residues 1635 to 1863; sequence DVPSNWTLEE…VQVLAEEPEA (229 aa). 1671–1688 serves as a coordination point for NADP(+); that stretch reads LLIHSGSGGVGQAAIAIA. Lys-1704 carries the post-translational modification N6-(pyridoxal phosphate)lysine; alternate. The residue at position 1704 (Lys-1704) is an N6-acetyllysine; alternate. 2 positions are modified to N6-acetyllysine: Lys-1771 and Lys-1847. A beta-ketoacyl reductase region spans residues 1864–2118; it reads VLKGAKPKLM…FVLAEKAAAY (255 aa). 1886-1901 contributes to the NADP(+) binding site; the sequence is SYIIAGGLGGFGLELA. N6-acetyllysine is present on Lys-1995. Cys-2091 is modified (S-nitrosocysteine). The 78-residue stretch at 2121 to 2198 folds into the Carrier domain; the sequence is RDSQRDLVEA…ELSSKADEAS (78 aa). Residue Ser-2156 is modified to O-(pantetheine 4'-phosphoryl)serine; alternate. Residue Ser-2156 is modified to Phosphoserine; alternate. At Ser-2198 the chain carries Phosphoserine. Phosphothreonine occurs at positions 2204 and 2215. A thioesterase region spans residues 2207-2511; the sequence is EDGLAQQQTQ…AEPRVSVREG (305 aa). Ser-2236 is modified (phosphoserine). Ser-2308 serves as the catalytic For thioesterase activity. N6-acetyllysine is present on Lys-2391. Residue Lys-2449 forms a Glycyl lysine isopeptide (Lys-Gly) (interchain with G-Cter in SUMO2) linkage. Residue His-2481 is the For thioesterase activity of the active site.

As to quaternary structure, homodimer which is arranged in a head to tail fashion. Interacts with CEACAM1; this interaction is insulin and phosphorylation-dependent; reduces fatty-acid synthase activity. Post-translationally, S-nitrosylation of Fatty acid synthase at cysteine residues Cys-1471 or Cys-2091 is important for the enzyme dimerization. In adipocytes, S-nitrosylation of Fatty acid synthase occurs under physiological conditions and gradually increases during adipogenesis. Ubiquitous. Prominent expression in brain, lung, liver and mammary gland.

The protein localises to the cytoplasm. Its subcellular location is the melanosome. It carries out the reaction acetyl-CoA + n malonyl-CoA + 2n NADPH + 2n H(+) = a long-chain fatty acid + (n+1) CoA + n CO2 + 2n NADP(+).. The enzyme catalyses holo-[ACP] + acetyl-CoA = acetyl-[ACP] + CoA. It catalyses the reaction holo-[ACP] + malonyl-CoA = malonyl-[ACP] + CoA. The catalysed reaction is a fatty acyl-[ACP] + malonyl-[ACP] + H(+) = a 3-oxoacyl-[ACP] + holo-[ACP] + CO2. It carries out the reaction a (3R)-hydroxyacyl-[ACP] + NADP(+) = a 3-oxoacyl-[ACP] + NADPH + H(+). The enzyme catalyses a (3R)-hydroxyacyl-[ACP] = a (2E)-enoyl-[ACP] + H2O. It catalyses the reaction a 2,3-saturated acyl-[ACP] + NADP(+) = a (2E)-enoyl-[ACP] + NADPH + H(+). The catalysed reaction is hexadecanoyl-[ACP] + H2O = hexadecanoate + holo-[ACP] + H(+). It carries out the reaction acetyl-[ACP] + malonyl-[ACP] + H(+) = 3-oxobutanoyl-[ACP] + holo-[ACP] + CO2. The enzyme catalyses 3-oxobutanoyl-[ACP] + NADPH + H(+) = (3R)-hydroxybutanoyl-[ACP] + NADP(+). It catalyses the reaction (3R)-hydroxybutanoyl-[ACP] = (2E)-butenoyl-[ACP] + H2O. The catalysed reaction is (2E)-butenoyl-[ACP] + NADPH + H(+) = butanoyl-[ACP] + NADP(+). It carries out the reaction butanoyl-[ACP] + malonyl-[ACP] + H(+) = 3-oxohexanoyl-[ACP] + holo-[ACP] + CO2. The enzyme catalyses 3-oxohexanoyl-[ACP] + NADPH + H(+) = (3R)-hydroxyhexanoyl-[ACP] + NADP(+). It catalyses the reaction (3R)-hydroxyhexanoyl-[ACP] = (2E)-hexenoyl-[ACP] + H2O. The catalysed reaction is (2E)-hexenoyl-[ACP] + NADPH + H(+) = hexanoyl-[ACP] + NADP(+). It carries out the reaction hexanoyl-[ACP] + malonyl-[ACP] + H(+) = 3-oxooctanoyl-[ACP] + holo-[ACP] + CO2. The enzyme catalyses 3-oxooctanoyl-[ACP] + NADPH + H(+) = (3R)-hydroxyoctanoyl-[ACP] + NADP(+). It catalyses the reaction (3R)-hydroxyoctanoyl-[ACP] = (2E)-octenoyl-[ACP] + H2O. The catalysed reaction is (2E)-octenoyl-[ACP] + NADPH + H(+) = octanoyl-[ACP] + NADP(+). It carries out the reaction octanoyl-[ACP] + malonyl-[ACP] + H(+) = 3-oxodecanoyl-[ACP] + holo-[ACP] + CO2. The enzyme catalyses 3-oxodecanoyl-[ACP] + NADPH + H(+) = (3R)-hydroxydecanoyl-[ACP] + NADP(+). It catalyses the reaction (3R)-hydroxydecanoyl-[ACP] = (2E)-decenoyl-[ACP] + H2O. The catalysed reaction is (2E)-decenoyl-[ACP] + NADPH + H(+) = decanoyl-[ACP] + NADP(+). It carries out the reaction decanoyl-[ACP] + malonyl-[ACP] + H(+) = 3-oxododecanoyl-[ACP] + holo-[ACP] + CO2. The enzyme catalyses 3-oxododecanoyl-[ACP] + NADPH + H(+) = (3R)-hydroxydodecanoyl-[ACP] + NADP(+). It catalyses the reaction (3R)-hydroxydodecanoyl-[ACP] = (2E)-dodecenoyl-[ACP] + H2O. The catalysed reaction is (2E)-dodecenoyl-[ACP] + NADPH + H(+) = dodecanoyl-[ACP] + NADP(+). It carries out the reaction dodecanoyl-[ACP] + malonyl-[ACP] + H(+) = 3-oxotetradecanoyl-[ACP] + holo-[ACP] + CO2. The enzyme catalyses 3-oxotetradecanoyl-[ACP] + NADPH + H(+) = (3R)-hydroxytetradecanoyl-[ACP] + NADP(+). It catalyses the reaction (3R)-hydroxytetradecanoyl-[ACP] = (2E)-tetradecenoyl-[ACP] + H2O. The catalysed reaction is (2E)-tetradecenoyl-[ACP] + NADPH + H(+) = tetradecanoyl-[ACP] + NADP(+). It carries out the reaction tetradecanoyl-[ACP] + malonyl-[ACP] + H(+) = 3-oxohexadecanoyl-[ACP] + holo-[ACP] + CO2. The enzyme catalyses 3-oxohexadecanoyl-[ACP] + NADPH + H(+) = (3R)-hydroxyhexadecanoyl-[ACP] + NADP(+). It catalyses the reaction (3R)-hydroxyhexadecanoyl-[ACP] = (2E)-hexadecenoyl-[ACP] + H2O. The catalysed reaction is (2E)-hexadecenoyl-[ACP] + NADPH + H(+) = hexadecanoyl-[ACP] + NADP(+). It carries out the reaction hexadecanoyl-[ACP] + malonyl-[ACP] + H(+) = 3-oxooctadecanoyl-[ACP] + holo-[ACP] + CO2. The enzyme catalyses 3-oxooctadecanoyl-[ACP] + NADPH + H(+) = (3R)-hydroxyoctadecanoyl-[ACP] + NADP(+). It catalyses the reaction (3R)-hydroxyoctadecanoyl-[ACP] = (2E)-octadecenoyl-[ACP] + H2O. The catalysed reaction is (2E)-octadecenoyl-[ACP] + NADPH + H(+) = octadecanoyl-[ACP] + NADP(+). It carries out the reaction tetradecanoyl-[ACP] + H2O = tetradecanoate + holo-[ACP] + H(+). The enzyme catalyses octadecanoyl-[ACP] + H2O = octadecanoate + holo-[ACP] + H(+). It functions in the pathway lipid metabolism; fatty acid biosynthesis. Activated by S-nitrosylation which promotes enzyme dimerization. Cerulenin, a potent non-competitive pharmacological inhibitor of FAS, binds covalently to the active site of the condensing enzyme region, inactivating a key enzyme step in fatty acid synthesis. Its function is as follows. Fatty acid synthetase is a multifunctional enzyme that catalyzes the de novo biosynthesis of long-chain saturated fatty acids starting from acetyl-CoA and malonyl-CoA in the presence of NADPH. This multifunctional protein contains 7 catalytic activities and a site for the binding of the prosthetic group 4'-phosphopantetheine of the acyl carrier protein ([ACP]) domain. Functionally, (Microbial infection) Fatty acid synthetase activity is required for SARS coronavirus-2/SARS-CoV-2 replication. This chain is Fatty acid synthase (FASN), found in Homo sapiens (Human).